Here is a 206-residue protein sequence, read N- to C-terminus: Holliday junction branch migration complex subunit RuvA (206 aa).

Positions 1–63 are domain I; it reads MIASLRGTVI…EDAMKLYGFI (63 aa). The segment at 64–142 is domain II; that stretch reads DNESREMFSV…AFAAGVVDEA (79 aa). Positions 143-153 are flexible linker; that stretch reads GEQISLPNANI. The segment at 154 to 206 is domain III; it reads ASEVVVEQVSQALVGLGFSEKQSDDAVSFVLAADPSLDTSGALRAALAKLSGK.

It belongs to the RuvA family. As to quaternary structure, homotetramer. Forms an RuvA(8)-RuvB(12)-Holliday junction (HJ) complex. HJ DNA is sandwiched between 2 RuvA tetramers; dsDNA enters through RuvA and exits via RuvB. An RuvB hexamer assembles on each DNA strand where it exits the tetramer. Each RuvB hexamer is contacted by two RuvA subunits (via domain III) on 2 adjacent RuvB subunits; this complex drives branch migration. In the full resolvosome a probable DNA-RuvA(4)-RuvB(12)-RuvC(2) complex forms which resolves the HJ.

The protein localises to the cytoplasm. Functionally, the RuvA-RuvB-RuvC complex processes Holliday junction (HJ) DNA during genetic recombination and DNA repair, while the RuvA-RuvB complex plays an important role in the rescue of blocked DNA replication forks via replication fork reversal (RFR). RuvA specifically binds to HJ cruciform DNA, conferring on it an open structure. The RuvB hexamer acts as an ATP-dependent pump, pulling dsDNA into and through the RuvAB complex. HJ branch migration allows RuvC to scan DNA until it finds its consensus sequence, where it cleaves and resolves the cruciform DNA. This Corynebacterium glutamicum (strain R) protein is Holliday junction branch migration complex subunit RuvA.